The chain runs to 472 residues: Tryptophanase (472 aa).

An N6-(pyridoxal phosphate)lysine modification is found at lysine 270.

The protein belongs to the beta-eliminating lyase family. In terms of assembly, homotetramer. It depends on pyridoxal 5'-phosphate as a cofactor.

It carries out the reaction L-tryptophan + H2O = indole + pyruvate + NH4(+). It participates in amino-acid degradation; L-tryptophan degradation via pyruvate pathway; indole and pyruvate from L-tryptophan: step 1/1. This chain is Tryptophanase (tnaA), found in Vibrio cholerae serotype O1 (strain ATCC 39315 / El Tor Inaba N16961).